The primary structure comprises 227 residues: Cytochrome c oxidase subunit 2 (227 aa).

The Mitochondrial intermembrane segment spans residues 1 to 14 (MAYSFQLGLQDATS). A helical membrane pass occupies residues 15 to 45 (PIMEELMNFHDHTLMIVFLISSLVLYIISLM). The Mitochondrial matrix portion of the chain corresponds to 46-59 (LTTKLTHTSTMDAQ). The chain crosses the membrane as a helical span at residues 60–87 (EVETIWTILPAVILIMIALPSLRILYMM). The Mitochondrial intermembrane portion of the chain corresponds to 88 to 227 (DEINNPVLTV…HFENWSASMI (140 aa)). Residues H161, C196, E198, C200, H204, and M207 each contribute to the Cu cation site. E198 serves as a coordination point for Mg(2+).

Belongs to the cytochrome c oxidase subunit 2 family. As to quaternary structure, component of the cytochrome c oxidase (complex IV, CIV), a multisubunit enzyme composed of 14 subunits. The complex is composed of a catalytic core of 3 subunits MT-CO1, MT-CO2 and MT-CO3, encoded in the mitochondrial DNA, and 11 supernumerary subunits COX4I, COX5A, COX5B, COX6A, COX6B, COX6C, COX7A, COX7B, COX7C, COX8 and NDUFA4, which are encoded in the nuclear genome. The complex exists as a monomer or a dimer and forms supercomplexes (SCs) in the inner mitochondrial membrane with NADH-ubiquinone oxidoreductase (complex I, CI) and ubiquinol-cytochrome c oxidoreductase (cytochrome b-c1 complex, complex III, CIII), resulting in different assemblies (supercomplex SCI(1)III(2)IV(1) and megacomplex MCI(2)III(2)IV(2)). Found in a complex with TMEM177, COA6, COX18, COX20, SCO1 and SCO2. Interacts with TMEM177 in a COX20-dependent manner. Interacts with COX20. Interacts with COX16. It depends on Cu cation as a cofactor.

Its subcellular location is the mitochondrion inner membrane. The catalysed reaction is 4 Fe(II)-[cytochrome c] + O2 + 8 H(+)(in) = 4 Fe(III)-[cytochrome c] + 2 H2O + 4 H(+)(out). In terms of biological role, component of the cytochrome c oxidase, the last enzyme in the mitochondrial electron transport chain which drives oxidative phosphorylation. The respiratory chain contains 3 multisubunit complexes succinate dehydrogenase (complex II, CII), ubiquinol-cytochrome c oxidoreductase (cytochrome b-c1 complex, complex III, CIII) and cytochrome c oxidase (complex IV, CIV), that cooperate to transfer electrons derived from NADH and succinate to molecular oxygen, creating an electrochemical gradient over the inner membrane that drives transmembrane transport and the ATP synthase. Cytochrome c oxidase is the component of the respiratory chain that catalyzes the reduction of oxygen to water. Electrons originating from reduced cytochrome c in the intermembrane space (IMS) are transferred via the dinuclear copper A center (CU(A)) of subunit 2 and heme A of subunit 1 to the active site in subunit 1, a binuclear center (BNC) formed by heme A3 and copper B (CU(B)). The BNC reduces molecular oxygen to 2 water molecules using 4 electrons from cytochrome c in the IMS and 4 protons from the mitochondrial matrix. In Praomys jacksoni (African forest rat), this protein is Cytochrome c oxidase subunit 2 (MT-CO2).